A 265-amino-acid polypeptide reads, in one-letter code: tRNA(His) guanylyltransferase (265 aa).

Residues Asp-29, Gly-30, and Asp-76 each coordinate Mg(2+). Residues Asp-29 to His-34 and Ser-75 to Asp-76 each bind GTP.

This sequence belongs to the tRNA(His) guanylyltransferase family. Mg(2+) is required as a cofactor.

It carries out the reaction a 5'-end ribonucleotide-tRNA(His) + GTP + ATP + H2O = a 5'-end phospho-guanosine-ribonucleotide-tRNA(His) + AMP + 2 diphosphate + H(+). Its function is as follows. Adds a GMP to the 5'-end of tRNA(His) after transcription and RNase P cleavage. The sequence is that of tRNA(His) guanylyltransferase (THG1) from Debaryomyces hansenii (strain ATCC 36239 / CBS 767 / BCRC 21394 / JCM 1990 / NBRC 0083 / IGC 2968) (Yeast).